A 434-amino-acid chain; its full sequence is FAD-dependent monooxygenase cfoG (434 aa).

An N-terminal signal peptide occupies residues 1-22; that stretch reads MKSSPGLHIIIVGAGITGLATA. E36 is an FAD binding site. Active-site residues include R193 and Y233. D314 and G327 together coordinate FAD.

It belongs to the paxM FAD-dependent monooxygenase family. In terms of assembly, monomer. Requires FAD as cofactor.

It functions in the pathway secondary metabolite biosynthesis; flavonoid biosynthesis. Its function is as follows. Monooxygenase; part of the gene cluster that mediates the biosynthesis of chlorflavonin, a fungal flavonoid with acetolactate synthase inhibitory activity. Within the pathway, cfoG is responsible for the hydroxylation of the flavonoid skeleton at position C8. The pathway begins with the PKS-NRPS hybrid synthetase cfoA that uses benzoic acid or p-hydroxybenzoic acid as a starter unit with four rounds of chain elongation using malonyl-CoA to form the chalcone skeleton. Then, a new type of chalcone isomerase, cfoK, catalyzes the conversion of the chalcone into a flavanone by a histidine-mediated oxa-Michael addition mechanism. The desaturation of flavanone to flavone is catalyzed by a new type of flavone synthase, the flavin mononucleotide (FMN)-dependent oxidoreductase cfoJ. Monooxygenases cfoF, cfoG, and P450 cfoH are responsible for the hydroxylation of the flavonoid skeleton at sites C3, C8, and C2', respectively. Like cfoF, the dehydratase cfoI plays also a role in the hydroxylation of position C3. Methyltransferases cfoB, cfoC, and cfoD then catalyze the methylation of C7-OH, C8-OH, and C3-OH, respectively. Finally, the monooxygenase cfoE is responsible for the chlorination of flavonoid at position C3'. This Aspergillus candidus protein is FAD-dependent monooxygenase cfoG.